The following is a 498-amino-acid chain: Cytochrome P450 monooxygenase 71 (498 aa).

The chain crosses the membrane as a helical span at residues 7–24; it reads YVFALLGILATLYFVRWS. N425 carries an N-linked (GlcNAc...) asparagine glycan. C440 is a heme binding site.

This sequence belongs to the cytochrome P450 family. Heme serves as cofactor.

It localises to the membrane. It functions in the pathway secondary metabolite biosynthesis. Cytochrome P450 monooxygenase that is able to use dehydroabietic acid and testosterone as substrates for oxidation, suggesting that the natural substrate(s) may be structurally related to steroid compounds. This chain is Cytochrome P450 monooxygenase 71, found in Postia placenta (strain ATCC 44394 / Madison 698-R) (Brown rot fungus).